The chain runs to 376 residues: Glutamate 5-kinase (376 aa).

Lys17 is an ATP binding site. Substrate is bound by residues Ser57, Asp144, and Asn156. 176–177 (TD) contributes to the ATP binding site. The region spanning 283–361 (KGQLVLDEGA…SEINQLLGYS (79 aa)) is the PUA domain.

It belongs to the glutamate 5-kinase family.

It is found in the cytoplasm. The catalysed reaction is L-glutamate + ATP = L-glutamyl 5-phosphate + ADP. It functions in the pathway amino-acid biosynthesis; L-proline biosynthesis; L-glutamate 5-semialdehyde from L-glutamate: step 1/2. Catalyzes the transfer of a phosphate group to glutamate to form L-glutamate 5-phosphate. This is Glutamate 5-kinase from Hydrogenovibrio crunogenus (strain DSM 25203 / XCL-2) (Thiomicrospira crunogena).